Consider the following 50-residue polypeptide: Peptide encoded by miPEP319a (50 aa).

Regulatory peptide encoded by the primary transcript (pri-miR319a) of the microRNA miR319a that enhances the accumulation of its corresponding mature miRNA. Acts probably as a transcriptional activator of its corresponding pri-miRNA. In Arabidopsis thaliana (Mouse-ear cress), this protein is Peptide encoded by miPEP319a.